The following is a 1048-amino-acid chain: Selenate reductase subunit A (1048 aa).

A signal peptide (tat-type signal) is located at residues 1–39; that stretch reads MENQHQKFISRRNFIKTSALLGGTAFLGTGLPNIKKTYS. In terms of domain architecture, 4Fe-4S Mo/W bis-MGD-type spans 56–129; it reads ENILYSACLQ…AGIQHAYDPY (74 aa). Cysteine 63, cysteine 66, cysteine 70, and cysteine 115 together coordinate [4Fe-4S] cluster. Cysteine 270 provides a ligand contact to Mo-bis(molybdopterin guanine dinucleotide).

It belongs to the prokaryotic molybdopterin-containing oxidoreductase family. The complex is composed of three subunits: SrdA, SrdB and SrdC. [4Fe-4S] cluster serves as cofactor. It depends on Mo-bis(molybdopterin guanine dinucleotide) as a cofactor. In terms of processing, predicted to be exported by the Tat system. The position of the signal peptide cleavage has not been experimentally proven.

It is found in the secreted. The catalysed reaction is selenite + a quinone + H2O = selenate + a quinol. Functionally, component of the respiratory selenate reductase complex, which catalyzes the reduction of selenate to selenite. SrdA is probably the catalytic subunit that reduces selenate. In Mesobacillus selenatarsenatis (strain DSM 18680 / JCM 14380 / FERM P-15431 / SF-1), this protein is Selenate reductase subunit A.